Consider the following 350-residue polypeptide: Uroporphyrinogen decarboxylase (350 aa).

Substrate contacts are provided by residues Arg-27–Arg-31, Phe-46, Asp-76, Tyr-152, Ser-207, and His-321.

The protein belongs to the uroporphyrinogen decarboxylase family. As to quaternary structure, homodimer.

It localises to the cytoplasm. It carries out the reaction uroporphyrinogen III + 4 H(+) = coproporphyrinogen III + 4 CO2. It functions in the pathway porphyrin-containing compound metabolism; protoporphyrin-IX biosynthesis; coproporphyrinogen-III from 5-aminolevulinate: step 4/4. Functionally, catalyzes the decarboxylation of four acetate groups of uroporphyrinogen-III to yield coproporphyrinogen-III. The protein is Uroporphyrinogen decarboxylase of Listeria welshimeri serovar 6b (strain ATCC 35897 / DSM 20650 / CCUG 15529 / CIP 8149 / NCTC 11857 / SLCC 5334 / V8).